A 252-amino-acid chain; its full sequence is Fluoroquinolones export permease protein MT2760 (252 aa).

6 helical membrane passes run 31–51, 69–89, 119–139, 148–168, 176–196, and 224–244; these read VMLV…TPLF, LILT…LAAF, ATVM…SGIL, IPIG…ILAV, LAMV…PWFI, and TWWP…WVLF.

As to quaternary structure, the complex is composed of 2 ATP-binding proteins and 2 transmembrane proteins.

The protein resides in the cell membrane. Part of the ABC transporter complex involved in fluoroquinolones export. Probably responsible for the translocation of the substrate across the membrane. This Mycobacterium tuberculosis (strain CDC 1551 / Oshkosh) protein is Fluoroquinolones export permease protein MT2760.